A 116-amino-acid chain; its full sequence is Chorion protein S15 (116 aa).

The first 18 residues, 1-18 (MKFLIAFAVLALVACINA), serve as a signal peptide directing secretion.

Belongs to the chorion protein S15/S18 family.

It localises to the secreted. Its function is as follows. Chorion membrane (egg shell) protein; plays a role in protecting the egg from the environment. This is Chorion protein S15 (Cp15) from Drosophila virilis (Fruit fly).